Consider the following 353-residue polypeptide: Protein RecA (353 aa).

Residue 74 to 81 coordinates ATP; that stretch reads GPESSGKT.

This sequence belongs to the RecA family.

Its subcellular location is the cytoplasm. Can catalyze the hydrolysis of ATP in the presence of single-stranded DNA, the ATP-dependent uptake of single-stranded DNA by duplex DNA, and the ATP-dependent hybridization of homologous single-stranded DNAs. It interacts with LexA causing its activation and leading to its autocatalytic cleavage. The chain is Protein RecA from Bordetella bronchiseptica (strain ATCC BAA-588 / NCTC 13252 / RB50) (Alcaligenes bronchisepticus).